The sequence spans 448 residues: UDP-N-acetylmuramoylalanine--D-glutamate ligase (448 aa).

Residue 112–118 coordinates ATP; sequence GSNAKST.

It belongs to the MurCDEF family.

It is found in the cytoplasm. The catalysed reaction is UDP-N-acetyl-alpha-D-muramoyl-L-alanine + D-glutamate + ATP = UDP-N-acetyl-alpha-D-muramoyl-L-alanyl-D-glutamate + ADP + phosphate + H(+). Its pathway is cell wall biogenesis; peptidoglycan biosynthesis. In terms of biological role, cell wall formation. Catalyzes the addition of glutamate to the nucleotide precursor UDP-N-acetylmuramoyl-L-alanine (UMA). The sequence is that of UDP-N-acetylmuramoylalanine--D-glutamate ligase from Acinetobacter baylyi (strain ATCC 33305 / BD413 / ADP1).